The chain runs to 208 residues: Protein TIC 20-II, chloroplastic (208 aa).

A chloroplast-targeting transit peptide spans 1-49 (MASLCLSLHQTLTNPLSAPRCRPLSLSFPGSSTFSIRPSSRRATALTTR). Transmembrane regions (helical) follow at residues 61–83 (VISI…FLFA), 101–121 (LYRS…LGVV), 134–154 (AMQA…TRIL), and 172–192 (TGVF…SLLG).

Belongs to the Tic20 family. Part of the Tic complex. Expressed in leaves, siliques and roots.

The protein localises to the plastid. The protein resides in the chloroplast inner membrane. Its function is as follows. May be involved in protein precursor import into chloroplasts. Not redundant with TIC20-I, TIC20-IV or TIC20-V. The sequence is that of Protein TIC 20-II, chloroplastic (TIC20-II) from Arabidopsis thaliana (Mouse-ear cress).